Reading from the N-terminus, the 1387-residue chain is Magnesium-chelatase subunit ChlH, chloroplastic (1387 aa).

The transit peptide at 1–50 (MSSLVSTPFTTATGVQKKLGAPVPLHSFLLSRRQPAAGAGRGRAAAAAIR) directs the protein to the chloroplast.

It belongs to the Mg-chelatase subunit H family. As to quaternary structure, the magnesium chelatase complex is a heterotrimer consisting of subunits CHLI, CHLD and CHLH.

The protein localises to the plastid. It localises to the chloroplast stroma. The protein resides in the chloroplast membrane. The enzyme catalyses protoporphyrin IX + Mg(2+) + ATP + H2O = Mg-protoporphyrin IX + ADP + phosphate + 3 H(+). It functions in the pathway porphyrin-containing compound metabolism; chlorophyll biosynthesis. Functionally, involved in chlorophyll biosynthesis. Catalyzes the insertion of magnesium ion into protoporphyrin IX to yield Mg-protoporphyrin IX. The reaction takes place in two steps, with an ATP-dependent activation followed by an ATP-dependent chelation step. May be involved in the plastid-to-nucleus retrograde signaling. This chain is Magnesium-chelatase subunit ChlH, chloroplastic (CHLH), found in Oryza sativa subsp. indica (Rice).